The sequence spans 245 residues: Probable transcriptional regulatory protein MARTH_orf271 (245 aa).

This sequence belongs to the TACO1 family.

It is found in the cytoplasm. The protein is Probable transcriptional regulatory protein MARTH_orf271 of Metamycoplasma arthritidis (strain 158L3-1) (Mycoplasma arthritidis).